We begin with the raw amino-acid sequence, 157 residues long: MRIGFGYDVHRLVEGRPLILGGVQVPHDRGLAGHSDADVLLHAVADALLGAAALGDLGAHFPDTDAKWKDADSQALLRRVVERVQHAGYAPHNVDATVLLERPKLRPHVDEMRTNIARALSFPRDAVSVKATTTEGIGFVGREEGVAAQAACTIQSA.

Residues aspartate 8 and histidine 10 each contribute to the a divalent metal cation site. 4-CDP-2-C-methyl-D-erythritol 2-phosphate is bound by residues 8 to 10 (DVH) and 34 to 35 (HS). Histidine 42 contributes to the a divalent metal cation binding site. 4-CDP-2-C-methyl-D-erythritol 2-phosphate is bound by residues 56-58 (DLG), 61-65 (FPDTD), 132-135 (TTTE), phenylalanine 139, and arginine 142.

The protein belongs to the IspF family. Homotrimer. The cofactor is a divalent metal cation.

The catalysed reaction is 4-CDP-2-C-methyl-D-erythritol 2-phosphate = 2-C-methyl-D-erythritol 2,4-cyclic diphosphate + CMP. It participates in isoprenoid biosynthesis; isopentenyl diphosphate biosynthesis via DXP pathway; isopentenyl diphosphate from 1-deoxy-D-xylulose 5-phosphate: step 4/6. Its function is as follows. Involved in the biosynthesis of isopentenyl diphosphate (IPP) and dimethylallyl diphosphate (DMAPP), two major building blocks of isoprenoid compounds. Catalyzes the conversion of 4-diphosphocytidyl-2-C-methyl-D-erythritol 2-phosphate (CDP-ME2P) to 2-C-methyl-D-erythritol 2,4-cyclodiphosphate (ME-CPP) with a corresponding release of cytidine 5-monophosphate (CMP). This Salinibacter ruber (strain DSM 13855 / M31) protein is 2-C-methyl-D-erythritol 2,4-cyclodiphosphate synthase.